A 273-amino-acid chain; its full sequence is Flagellin FljN (273 aa).

It belongs to the bacterial flagellin family. In terms of assembly, in C.crescentus, the flagellar filament is composed of multiple flagellins of 29 kDa; 27 kDa and 25 kDa.

It is found in the secreted. Its subcellular location is the bacterial flagellum. Functionally, flagellin is the subunit protein which polymerizes to form the filaments of bacterial flagella. This is Flagellin FljN (fljN) from Caulobacter vibrioides (strain ATCC 19089 / CIP 103742 / CB 15) (Caulobacter crescentus).